A 327-amino-acid chain; its full sequence is N-acetyl-gamma-glutamyl-phosphate reductase (327 aa).

Cys136 is a catalytic residue.

It belongs to the NAGSA dehydrogenase family. Type 1 subfamily.

Its subcellular location is the cytoplasm. The enzyme catalyses N-acetyl-L-glutamate 5-semialdehyde + phosphate + NADP(+) = N-acetyl-L-glutamyl 5-phosphate + NADPH + H(+). It participates in amino-acid biosynthesis; L-arginine biosynthesis; N(2)-acetyl-L-ornithine from L-glutamate: step 3/4. Its function is as follows. Catalyzes the NADPH-dependent reduction of N-acetyl-5-glutamyl phosphate to yield N-acetyl-L-glutamate 5-semialdehyde. In Xylella fastidiosa (strain M23), this protein is N-acetyl-gamma-glutamyl-phosphate reductase.